A 237-amino-acid chain; its full sequence is Tetraspanin-8 (237 aa).

Residues 1–9 (MAGVSACIK) lie on the Cytoplasmic side of the membrane. A helical transmembrane segment spans residues 10 to 33 (YSMFTFNFLFWLCGILILALAIWV). Residues 34-57 (RVSNDSQAIFGSEDVGSSSYVAVD) are Extracellular-facing. A helical membrane pass occupies residues 58 to 72 (ILIAVGAIIMILGFL). Topologically, residues 73–83 (GCCGAIKESRC) are cytoplasmic. The chain crosses the membrane as a helical span at residues 84-109 (MLLLFFIGLLLILLLQVATGILGAVF). Over 110–205 (KSKSDRIVNE…SFIKDFLAKN (96 aa)) the chain is Extracellular. The N-linked (GlcNAc...) asparagine glycan is linked to Asn118. The chain crosses the membrane as a helical span at residues 206–230 (LIIVIGISFGLAVIEILGLVFSMVL). At 231–237 (YCQIGNK) the chain is on the cytoplasmic side.

It belongs to the tetraspanin (TM4SF) family. As to quaternary structure, forms homooligomers. Interacts with MEP1B. Interacts with integrin alpha3/ITGA3. Interacts with RICTOR and MTOR. Interacts with ADAM17. Interacts with ECE1. As to expression, gastric, colon, rectal, and pancreatic carcinomas.

The protein localises to the cell membrane. In terms of biological role, structural component of specialized membrane microdomains known as tetraspanin-enriched microdomains (TERMs), which act as platforms for receptor clustering and signaling. Participates thereby in diverse biological functions such as cell signal transduction, migration and protein trafficking. Promotes ADAM17-mediated TNF-alpha processing through recruitment of ADAM17 to tetraspanin-enriched micro-domains (TEMs). Forms a complex with RICTOR and integrin alpha3/ITGA3 to mediate mTORC2 activation and AKT1 phosphorylation leading to cell migration. Reduces apoptosis and autophagy induced by high glucose levels through forming a complex with mTOR and RICTOR. Contributes to the maintenance of intestinal epithelial barrier and plays a role in the regulation of intestine inflammation by switching interferon gamma receptor 1/IFNGR1 from clathrin-dependent to lipid raft-dependent endocytosis route to limit STAT1 activation magnitude and duration. Acts as a modulator of the endothelin axis by associating with endothelin converting enzyme ECE1 and regulating its activity of conversion of the endothelin-1 precursor to endothelin. In Homo sapiens (Human), this protein is Tetraspanin-8 (TSPAN8).